We begin with the raw amino-acid sequence, 118 residues long: MIAGIGVDVVDLARFGRSLARTPALRDRLFTEAERGLPVHSLAARFAAKEALIKALGGSEGVRWHDLEIVSDEERNPAFVLRNVVERQALERGIAHIHVSMSHDAGIATAFVVLERDS.

Asp8 and Glu50 together coordinate Mg(2+).

This sequence belongs to the P-Pant transferase superfamily. AcpS family. The cofactor is Mg(2+).

The protein resides in the cytoplasm. It carries out the reaction apo-[ACP] + CoA = holo-[ACP] + adenosine 3',5'-bisphosphate + H(+). In terms of biological role, transfers the 4'-phosphopantetheine moiety from coenzyme A to a Ser of acyl-carrier-protein. This is Holo-[acyl-carrier-protein] synthase from Leifsonia xyli subsp. xyli (strain CTCB07).